Consider the following 429-residue polypeptide: MAAAAAVIPPSGLDDGVSRARGEGAGEAVVERGPGAAYHMFVVMEDLVEKLKLLRYEEELLRKSNLKPPSRHYFALPTNPGEQFYMFCTLAAWLINKTGRAFEQPQEYDDPNATISNILSELRSFGRTADFPPSKLKSGYGEQVCYVLDCLAEEALKYIGFTWKRPSYPVEELEEETVPEDDAELTLSKVDEEFVEEETDNEENFIDLNVLKAQTYRLDTNESAKQEDILESTTDAAEWSLEVERVLPQLKVTIRTDNKDWRIHVDQMHQHKSGIESALKETKGFLDKLHNEISRTLEKIGSREKYINNQLEHLVQEYRGAQAQLSEARERYQQGNGGVTERTRLLSEVTEELEKVKQEMEEKGSSMTDGTPLVKIKQSLTKLKQETVQMDIRIGVVEHTLLQSKLKEKCNMTRDMHAAVTPESAIGFY.

Positions 305-369 form a coiled coil; the sequence is KYINNQLEHL…MEEKGSSMTD (65 aa). The interval 335 to 426 is pDED; that stretch reads GNGGVTERTR…HAAVTPESAI (92 aa).

This sequence belongs to the IFT57 family. In terms of assembly, component of the IFT complex B, at least composed of IFT20, IFT22, IFT25, IFT27, IFT46, IFT52, TRAF3IP1/IFT54, IFT57, IFT74, IFT80, IFT81, and IFT88. Interacts with IFT20. Interacts with IFT88. Interacts with IFT80, IFT-81, IFT74, IFT172, IFT70B and KIF17. Interacts with BLOC1S2. Interacts with RYBP. Interacts with HOMER1; the interaction possibly prevents the pro-apoptotic effects of IFT57. Interacts with HIP1. In normal conditions, it poorly interacts with HIP1, HIP1 being strongly associated with HTT. However, in mutant HTT proteins with a long poly-Gln region, interaction between HTT and HIP1 is inhibited, promoting the interaction between HIP1 and IFT57, leading to apoptosis. Interacts with BFAR. Interacts with TTC25. Interacts with USH1G. In terms of tissue distribution, present in retina and testis. In brain, it is present in the cortex, striatum, globus pallidus, hypothalamus and cerebellum. Present at high level in neurons and neuropil throughout the brain (at protein level). Expressed in hippocampal neurons, where it colocalizes with HOMER1 at postsynaptic regions.

Its subcellular location is the cell projection. It localises to the cilium. The protein localises to the cytoplasm. The protein resides in the cytoskeleton. It is found in the cilium basal body. Its subcellular location is the golgi apparatus. Functionally, required for the formation of cilia. Plays an indirect role in sonic hedgehog signaling, cilia being required for all activity of the hedgehog pathway. Has pro-apoptotic function via its interaction with HIP1, leading to recruit caspase-8 (CASP8) and trigger apoptosis. Has the ability to bind DNA sequence motif 5'-AAAGACATG-3' present in the promoter of caspase genes such as CASP1, CASP8 and CASP10, suggesting that it may act as a transcription regulator; however the relevance of such function remains unclear. This chain is Intraflagellar transport protein 57 homolog (Ift57), found in Mus musculus (Mouse).